A 294-amino-acid chain; its full sequence is UDP-3-O-acyl-N-acetylglucosamine deacetylase (294 aa).

3 residues coordinate Zn(2+): His-75, His-232, and Asp-236. His-259 functions as the Proton donor in the catalytic mechanism.

The protein belongs to the LpxC family. It depends on Zn(2+) as a cofactor.

The enzyme catalyses a UDP-3-O-[(3R)-3-hydroxyacyl]-N-acetyl-alpha-D-glucosamine + H2O = a UDP-3-O-[(3R)-3-hydroxyacyl]-alpha-D-glucosamine + acetate. It participates in glycolipid biosynthesis; lipid IV(A) biosynthesis; lipid IV(A) from (3R)-3-hydroxytetradecanoyl-[acyl-carrier-protein] and UDP-N-acetyl-alpha-D-glucosamine: step 2/6. Its function is as follows. Catalyzes the hydrolysis of UDP-3-O-myristoyl-N-acetylglucosamine to form UDP-3-O-myristoylglucosamine and acetate, the committed step in lipid A biosynthesis. In Campylobacter curvus (strain 525.92), this protein is UDP-3-O-acyl-N-acetylglucosamine deacetylase.